The primary structure comprises 583 residues: Pentatricopeptide repeat-containing protein At2g33760 (583 aa).

9 PPR repeats span residues 71-105, 106-140, 141-171, 172-206, 207-241, 242-276, 277-303, 309-339, and 345-379; these read DDFL…NVSP, SNYT…GFGL, DTYV…MPEK, SIVA…GFEP, DSAT…GLDL, NVKL…NVAA, WTAM…MEDD, NNVT…MTKS, and GVEH…GKAT. The type E motif stretch occupies residues 383-458; it reads LWTAMLGACK…QVGYSVIEVE (76 aa). The segment at 459–489 is type E(+) motif; the sequence is NKTYMFSMGDESHQETGEIYRYLETLISRCK. A type DYW motif region spans residues 490 to 583; the sequence is EIGYAPVSEE…NGSCSCLDYW (94 aa).

Belongs to the PPR family. PCMP-H subfamily.

The polypeptide is Pentatricopeptide repeat-containing protein At2g33760 (PCMP-H6) (Arabidopsis thaliana (Mouse-ear cress)).